Reading from the N-terminus, the 99-residue chain is Nucleoid-associated protein SUB1611 (99 aa).

Belongs to the YbaB/EbfC family. In terms of assembly, homodimer.

Its subcellular location is the cytoplasm. The protein localises to the nucleoid. In terms of biological role, binds to DNA and alters its conformation. May be involved in regulation of gene expression, nucleoid organization and DNA protection. In Streptococcus uberis (strain ATCC BAA-854 / 0140J), this protein is Nucleoid-associated protein SUB1611.